A 465-amino-acid chain; its full sequence is ATP synthase subunit beta (465 aa).

Residue 149-156 coordinates ATP; it reads GGAGVGKT.

This sequence belongs to the ATPase alpha/beta chains family. As to quaternary structure, F-type ATPases have 2 components, CF(1) - the catalytic core - and CF(0) - the membrane proton channel. CF(1) has five subunits: alpha(3), beta(3), gamma(1), delta(1), epsilon(1). CF(0) has three main subunits: a(1), b(2) and c(9-12). The alpha and beta chains form an alternating ring which encloses part of the gamma chain. CF(1) is attached to CF(0) by a central stalk formed by the gamma and epsilon chains, while a peripheral stalk is formed by the delta and b chains.

The protein localises to the cell inner membrane. The enzyme catalyses ATP + H2O + 4 H(+)(in) = ADP + phosphate + 5 H(+)(out). In terms of biological role, produces ATP from ADP in the presence of a proton gradient across the membrane. The catalytic sites are hosted primarily by the beta subunits. The polypeptide is ATP synthase subunit beta (Dictyoglomus thermophilum (strain ATCC 35947 / DSM 3960 / H-6-12)).